A 319-amino-acid polypeptide reads, in one-letter code: ATP-dependent 6-phosphofructokinase (319 aa).

ATP is bound by residues glycine 10, arginine 71–serine 72, and glycine 101–serine 104. Aspartate 102 is a binding site for Mg(2+). Threonine 125–aspartate 127 lines the substrate pocket. The active-site Proton acceptor is aspartate 127. Arginine 154 lines the ADP pocket. Substrate contacts are provided by residues arginine 162 and methionine 169–arginine 171. Glycine 185–glutamate 187 contacts ADP. Substrate-binding positions include glutamate 223, arginine 244, and histidine 250–arginine 253.

Belongs to the phosphofructokinase type A (PFKA) family. ATP-dependent PFK group I subfamily. Prokaryotic clade 'B1' sub-subfamily. As to quaternary structure, homotetramer. Requires Mg(2+) as cofactor.

It localises to the cytoplasm. The catalysed reaction is beta-D-fructose 6-phosphate + ATP = beta-D-fructose 1,6-bisphosphate + ADP + H(+). Its pathway is carbohydrate degradation; glycolysis; D-glyceraldehyde 3-phosphate and glycerone phosphate from D-glucose: step 3/4. With respect to regulation, allosterically activated by ADP and other diphosphonucleosides, and allosterically inhibited by phosphoenolpyruvate. Its function is as follows. Catalyzes the phosphorylation of D-fructose 6-phosphate to fructose 1,6-bisphosphate by ATP, the first committing step of glycolysis. The chain is ATP-dependent 6-phosphofructokinase from Wolinella succinogenes (strain ATCC 29543 / DSM 1740 / CCUG 13145 / JCM 31913 / LMG 7466 / NCTC 11488 / FDC 602W) (Vibrio succinogenes).